We begin with the raw amino-acid sequence, 283 residues long: Putative 4-diphosphocytidyl-2-C-methyl-D-erythritol kinase (283 aa).

Residue lysine 10 is part of the active site. ATP is bound at residue 94 to 104; the sequence is PVCAGLGGGST. Aspartate 136 is a catalytic residue.

It belongs to the GHMP kinase family. IspE subfamily.

The enzyme catalyses 4-CDP-2-C-methyl-D-erythritol + ATP = 4-CDP-2-C-methyl-D-erythritol 2-phosphate + ADP + H(+). Its function is as follows. Catalyzes the phosphorylation of the position 2 hydroxy group of 4-diphosphocytidyl-2C-methyl-D-erythritol. This Streptococcus agalactiae serotype III (strain NEM316) protein is Putative 4-diphosphocytidyl-2-C-methyl-D-erythritol kinase.